The chain runs to 654 residues: DNA mismatch repair protein MutL (654 aa).

The disordered stretch occupies residues 358–437 (KEHVRETMQQ…ADRRTDESLP (80 aa)). Residues 384 to 394 (TSIGNSWSPSH) are compositionally biased toward polar residues. Over residues 413 to 434 (RNERVETNTEEKYEQADRRTDE) the composition is skewed to basic and acidic residues.

The protein belongs to the DNA mismatch repair MutL/HexB family.

In terms of biological role, this protein is involved in the repair of mismatches in DNA. It is required for dam-dependent methyl-directed DNA mismatch repair. May act as a 'molecular matchmaker', a protein that promotes the formation of a stable complex between two or more DNA-binding proteins in an ATP-dependent manner without itself being part of a final effector complex. The protein is DNA mismatch repair protein MutL of Shouchella clausii (strain KSM-K16) (Alkalihalobacillus clausii).